We begin with the raw amino-acid sequence, 458 residues long: Exodeoxyribonuclease 7 large subunit (458 aa).

It belongs to the XseA family. In terms of assembly, heterooligomer composed of large and small subunits.

It localises to the cytoplasm. The catalysed reaction is Exonucleolytic cleavage in either 5'- to 3'- or 3'- to 5'-direction to yield nucleoside 5'-phosphates.. Functionally, bidirectionally degrades single-stranded DNA into large acid-insoluble oligonucleotides, which are then degraded further into small acid-soluble oligonucleotides. This is Exodeoxyribonuclease 7 large subunit from Yersinia pseudotuberculosis serotype O:1b (strain IP 31758).